The following is a 967-amino-acid chain: Regulator of G-protein signaling 3 (967 aa).

The PDZ domain maps to 18–95 (QITIRRGKDG…EIILLVWRVV (78 aa)). The interval 115–135 (THDLLSPPNKREKNCTHGAPT) is disordered. Arg-167 bears the Omega-N-methylarginine mark. Residues 389-705 (QLAATPTERK…EGGLSLRVQN (317 aa)) are disordered. 3 stretches are compositionally biased toward polar residues: residues 476-486 (LPSSKNPSPSQ), 512-549 (SPSS…TEVP), and 577-597 (SSAS…QGSL). Over residues 650–676 (GEDEDAEEGEEGEEGEEDEEDDTNDDN) the composition is skewed to acidic residues. The span at 677-687 (YGDRNEAKRSS) shows a compositional bias: basic and acidic residues. 4 positions are modified to phosphoserine: Ser-713, Ser-716, Ser-748, and Ser-777. Residues 807–830 (FRRRNESPGAQPAGKADKTTKSFK) are disordered. Basic and acidic residues predominate over residues 821 to 830 (KADKTTKSFK). Residues 842–967 (SLEKLLLHKY…INQKKMSPPL (126 aa)) enclose the RGS domain.

As to quaternary structure, binds EFNB1 and EFNB2. Binds the GNB1-GNG2 heterodimer. Binds ESR1. Post-translationally, phosphorylated by cyclic GMP-dependent protein kinase. In terms of processing, ISGylated. In terms of tissue distribution, detected in kidney, uterus, ovary, heart, brain, spleen, lung and testis.

It is found in the cytoplasm. Its subcellular location is the membrane. The protein resides in the nucleus. In terms of biological role, down-regulates signaling from heterotrimeric G-proteins by increasing the GTPase activity of the alpha subunits, thereby driving them into their inactive GDP-bound form. Down-regulates G-protein-mediated release of inositol phosphates and activation of MAP kinases. The protein is Regulator of G-protein signaling 3 (Rgs3) of Rattus norvegicus (Rat).